Here is a 332-residue protein sequence, read N- to C-terminus: o-succinylbenzoate synthase (332 aa).

The active-site Proton donor is lysine 135. Mg(2+) is bound by residues aspartate 163, glutamate 192, and aspartate 215. Catalysis depends on lysine 241, which acts as the Proton acceptor.

This sequence belongs to the mandelate racemase/muconate lactonizing enzyme family. MenC type 1 subfamily. Requires a divalent metal cation as cofactor.

It carries out the reaction (1R,6R)-6-hydroxy-2-succinyl-cyclohexa-2,4-diene-1-carboxylate = 2-succinylbenzoate + H2O. The protein operates within quinol/quinone metabolism; 1,4-dihydroxy-2-naphthoate biosynthesis; 1,4-dihydroxy-2-naphthoate from chorismate: step 4/7. It participates in quinol/quinone metabolism; menaquinone biosynthesis. Converts 2-succinyl-6-hydroxy-2,4-cyclohexadiene-1-carboxylate (SHCHC) to 2-succinylbenzoate (OSB). This chain is o-succinylbenzoate synthase, found in Vibrio cholerae serotype O1 (strain ATCC 39315 / El Tor Inaba N16961).